Consider the following 238-residue polypeptide: Ribonuclease PH (238 aa).

Residues Arg-86 and Gly-124 to Arg-126 contribute to the phosphate site.

The protein belongs to the RNase PH family. In terms of assembly, homohexameric ring arranged as a trimer of dimers.

It catalyses the reaction tRNA(n+1) + phosphate = tRNA(n) + a ribonucleoside 5'-diphosphate. Its function is as follows. Phosphorolytic 3'-5' exoribonuclease that plays an important role in tRNA 3'-end maturation. Removes nucleotide residues following the 3'-CCA terminus of tRNAs; can also add nucleotides to the ends of RNA molecules by using nucleoside diphosphates as substrates, but this may not be physiologically important. Probably plays a role in initiation of 16S rRNA degradation (leading to ribosome degradation) during starvation. This is Ribonuclease PH from Photobacterium profundum (strain SS9).